The primary structure comprises 693 residues: Probable L-type lectin-domain containing receptor kinase VI.1 (693 aa).

The first 22 residues, 1–22 (MGIARSINSFMFFFFLMILSNA), serve as a signal peptide directing secretion. Asn-21, Asn-44, Asn-71, Asn-89, Asn-141, Asn-180, and Asn-223 each carry an N-linked (GlcNAc...) asparagine glycan. Over 23–311 (SKSSVLAEAT…SNKKGYNSQV (289 aa)) the chain is Extracellular. The legume-lectin like stretch occupies residues 33-279 (TAKFTFIGFK…AHYVMGWSFS (247 aa)). A helical membrane pass occupies residues 312 to 332 (IVLIVALSIVTLVLLVLLFIF). The Cytoplasmic segment spans residues 333-693 (VMYKRRIQEE…VSSSSIVSGR (361 aa)). The Protein kinase domain maps to 368–642 (FKESEIIGTG…LRYLNGEENV (275 aa)). ATP-binding positions include 374-382 (IGTGGFGIV) and Lys-396. Asp-495 serves as the catalytic Proton acceptor. Residues 670–693 (DRASSSNTFSSFSNVSSSSIVSGR) are disordered.

The protein in the C-terminal section; belongs to the protein kinase superfamily. Ser/Thr protein kinase family. It in the N-terminal section; belongs to the leguminous lectin family.

It localises to the cell membrane. The enzyme catalyses L-seryl-[protein] + ATP = O-phospho-L-seryl-[protein] + ADP + H(+). It carries out the reaction L-threonyl-[protein] + ATP = O-phospho-L-threonyl-[protein] + ADP + H(+). This chain is Probable L-type lectin-domain containing receptor kinase VI.1 (LECRK61), found in Arabidopsis thaliana (Mouse-ear cress).